Consider the following 357-residue polypeptide: D-alanine--D-alanine ligase (357 aa).

Residues K134 to D339 enclose the ATP-grasp domain. Residue N167–E222 coordinates ATP. D293, E306, and N308 together coordinate Mg(2+).

This sequence belongs to the D-alanine--D-alanine ligase family. It depends on Mg(2+) as a cofactor. Requires Mn(2+) as cofactor.

It is found in the cytoplasm. The enzyme catalyses 2 D-alanine + ATP = D-alanyl-D-alanine + ADP + phosphate + H(+). It participates in cell wall biogenesis; peptidoglycan biosynthesis. Its function is as follows. Cell wall formation. This Staphylococcus epidermidis (strain ATCC 35984 / DSM 28319 / BCRC 17069 / CCUG 31568 / BM 3577 / RP62A) protein is D-alanine--D-alanine ligase.